The chain runs to 137 residues: uncharacterized protein (137 aa).

The disordered stretch occupies residues 116 to 137 (ARPPRGSGGTRTARNGARTASE). Residues 125-137 (TRTARNGARTASE) show a composition bias toward polar residues.

This is an uncharacterized protein from Mycobacterium bovis (strain ATCC BAA-935 / AF2122/97).